Here is a 104-residue protein sequence, read N- to C-terminus: Replication restart protein PriB (104 aa).

One can recognise an SSB domain in the interval 1 to 101 (MTNRLELSGI…LHAEQIELID (101 aa)).

It belongs to the PriB family. In terms of assembly, homodimer. Interacts with DnaT. Interacts with PriA. Component of the replication restart primosome. Primosome assembly occurs via a 'hand-off' mechanism. PriA binds to replication forks, subsequently PriB then DnaT bind; DnaT then displaces ssDNA to generate the helicase loading substrate.

Functionally, involved in the restart of stalled replication forks, which reloads the replicative helicase on sites far from the origin of replication; the PriA-PriB pathway is the major replication restart pathway. During primosome assembly it facilitates complex formation between PriA and DnaT on DNA; stabilizes PriA on DNA. Stimulates the DNA unwinding activity of PriA helicase. In terms of biological role, binds single-stranded (ss)DNA at the primosome assembly site (PAS). One study finds it binds 15 nucleotide (nt) ssDNA. Another study finds the minimal ssDNA length for binding to PriB is 25 nt; prefers dT(30) over dA(30). Also binds 22 nt dsDNA. The chain is Replication restart protein PriB from Klebsiella pneumoniae subsp. pneumoniae (strain ATCC 700721 / MGH 78578).